The chain runs to 437 residues: Phosphoglucosamine mutase (437 aa).

The active-site Phosphoserine intermediate is the serine 101. Positions 101, 234, 236, and 238 each coordinate Mg(2+). Serine 101 is subject to Phosphoserine.

It belongs to the phosphohexose mutase family. Mg(2+) serves as cofactor. In terms of processing, activated by phosphorylation.

It carries out the reaction alpha-D-glucosamine 1-phosphate = D-glucosamine 6-phosphate. Its function is as follows. Catalyzes the conversion of glucosamine-6-phosphate to glucosamine-1-phosphate. The polypeptide is Phosphoglucosamine mutase (Thermus thermophilus (strain ATCC BAA-163 / DSM 7039 / HB27)).